An 81-amino-acid polypeptide reads, in one-letter code: Toxin MIT1 (81 aa).

5 cysteine pairs are disulfide-bonded: Cys-7-Cys-19, Cys-13-Cys-31, Cys-18-Cys-59, Cys-41-Cys-67, and Cys-61-Cys-77.

It belongs to the AVIT (prokineticin) family. As to expression, expressed by the venom gland.

Its subcellular location is the secreted. In terms of biological role, potent agonist for both PKR1/PROKR1 and PKR2/PROKR2. Potently contracts gastrointestinal (GI) smooth muscle. In Dendroaspis polylepis polylepis (Black mamba), this protein is Toxin MIT1.